Consider the following 775-residue polypeptide: MEAPYSMTAHYDEFQEVKYVSRCGTGGARGTSLPPGFPRGSGRSASGSRSGLPRWNRREVCLLSGLVFAAGLCAILAAMLALKYLGPGAAGGGGACPEGCPERKAFARAARFLSANLDASIDPCQDFYSFACGGWLRRHAIPDDKLTYGTIAAIGEQNEERLRRLLARPTGGPGGAAQRKVRAFFRSCLDMREIERLGPRPMLEVIEDCGGWDLGGAADRPGAARWDLNRLLYKAQGVYSAAALFSLTVSLDDRNSSRYVIRIDQDGLTLPERTLYLAQDEESEKILAAYRVFMQRLLRLLGADAVEQKAQEILQLEQRLANISVSEYDDLRRDVSSAYNKVTLGQLQKIIPHLQWKWLLDQIFQEDFSEEEEVVLLATDYMQQVSQLIRSTPRRILHNYLVWRVVVVLSEHLSSPFREALHELAKEMEGNDKPQELARVCLGQANRHFGMALGALFVHEHFSAASKAKVQQLVEDIKYILGQRLEELDWMDAQTKAAARAKLQYMMVMVGYPDFLLKPEAVDKEYEFEVHEKTYFKNILNSIRFSIQLSVKKIRQEVDKSSWLLPPQALNAYYLPNKNQMVFPAGILQPTLYDPDFPQSLNYGGIGTIIGHELTHGYDDWGGQYDRSGNLLHWWTETSYSHFLRKAECIVRLYDNFTVYNQRVNGKHTLGENIADMGGLKLAYYAYQKWVREHGPEHPLHRLKYTHNQLFFIAFAQNWCIKRRSQSIYLQVLTDKHAPEHYRVLGSVSQFEEFGRAFHCPKDSPMNPVHKCSVW.

The Cytoplasmic portion of the chain corresponds to 1-61 (MEAPYSMTAH…LPRWNRREVC (61 aa)). Residues 30–52 (GTSLPPGFPRGSGRSASGSRSGL) form a disordered region. Residues 32-52 (SLPPGFPRGSGRSASGSRSGL) are compositionally biased toward low complexity. Residues 62 to 82 (LLSGLVFAAGLCAILAAMLAL) form a helical; Signal-anchor for type II membrane protein membrane-spanning segment. Topologically, residues 83–775 (KYLGPGAAGG…MNPVHKCSVW (693 aa)) are lumenal. Positions 99-775 (GCPERKAFAR…MNPVHKCSVW (677 aa)) constitute a Peptidase M13 domain. Intrachain disulfides connect Cys-124/Cys-760, Cys-132/Cys-720, Cys-188/Cys-441, and Cys-649/Cys-772. 2 N-linked (GlcNAc...) asparagine glycosylation sites follow: Asn-255 and Asn-322. His-612 lines the Zn(2+) pocket. Glu-613 is an active-site residue. His-616 contributes to the Zn(2+) binding site. The N-linked (GlcNAc...) asparagine glycan is linked to Asn-656. Glu-672 lines the Zn(2+) pocket. Residue Asp-676 is the Proton donor of the active site.

The protein belongs to the peptidase M13 family. It depends on Zn(2+) as a cofactor.

It is found in the membrane. May contribute to the degradation of peptide hormones and be involved in the inactivation of neuronal peptides. The sequence is that of Endothelin-converting enzyme-like 1 (Ecel1) from Mus musculus (Mouse).